Consider the following 331-residue polypeptide: tRNA N6-adenosine threonylcarbamoyltransferase (331 aa).

Residues His109, His113, and Tyr130 each contribute to the Fe cation site. Substrate is bound by residues 130–134 (YLSGG), Asp162, Asp183, and Ser262. Asp290 is a binding site for Fe cation.

It belongs to the KAE1 / TsaD family. It depends on Fe(2+) as a cofactor.

The protein resides in the cytoplasm. It catalyses the reaction L-threonylcarbamoyladenylate + adenosine(37) in tRNA = N(6)-L-threonylcarbamoyladenosine(37) in tRNA + AMP + H(+). Its function is as follows. Required for the formation of a threonylcarbamoyl group on adenosine at position 37 (t(6)A37) in tRNAs that read codons beginning with adenine. Is probably involved in the transfer of the threonylcarbamoyl moiety of threonylcarbamoyl-AMP (TC-AMP) to the N6 group of A37. In Saccharolobus islandicus (strain M.16.27) (Sulfolobus islandicus), this protein is tRNA N6-adenosine threonylcarbamoyltransferase.